The sequence spans 617 residues: MKIALLANPARGEINVLLATAYELIRLGHEVVFLTGSSFRNAIAEFKDEQNDKLLASRIQFSDLGTAKAFEDFTRGMQSHLKGLRKPPGDYSSMEICQIVALVTEQEFREAATLVRDRLLELDPDMIAVDALSPNLVTGCRMTGLPWMFTVPCSPSLTATRKSLFDPHPMGSRRQRTLMSALENLKLTIRETYGNAIKKDLYARRALLKKEFGLNSMGFNADSAIVPPLWKDRNCVGGIHFNTPGLWDSIRQPHQITFVGCGVTSDPENHSPSQAGTPISEIAGWSPLTKLSTSFDQSGQGERDLDVEWMDAAYAAGESVVYLNMGSMFLWTDDEVRACLRAFERLHRESGGKIKLLFKLNKPKRNPGSPGFTSPLNSPTAVATPKWDEKRPIDSRRPSGVSTLIMAEKLSEAIKNVKPRRKTDAEKGYSQFMLSEFEGLEYVRFTRWVHDQRRIYKHPALRVVIHHGGGNSFNEAVHYGLPQMILSQWFDTHEYAILAERFGIGLRSKHAPFVDEQDMFAKMLRLLRGPEAEKIQANAKIWSTRSRNAGGAPAAARLLETHALLHRQRKQARDPTPTAKTSLSVDTTEVATPTFTDTETSLSPKILSSAASTVTNP.

2 disordered regions span residues 365-396 and 567-617; these read RNPG…IDSR and RQRK…VTNP. The segment covering 371–381 has biased composition (polar residues); that stretch reads GFTSPLNSPTA. Over residues 386 to 396 the composition is skewed to basic and acidic residues; that stretch reads KWDEKRPIDSR. A compositionally biased stretch (polar residues) spans 578–603; that stretch reads TAKTSLSVDTTEVATPTFTDTETSLS.

It belongs to the UDP-glycosyltransferase family.

It functions in the pathway secondary metabolite biosynthesis. In terms of biological role, glycosyltransferase; part of the gene cluster that mediates the biosynthesis of mannosylerythritol lipids (MELs), surface-active substances that enhance the availability of water-insoluble substrates. Depending on the number of acetyl groups, mannosylerythritol lipids can be differentiated into MEL A (fully acetylated), MEL B and MEL C (monoacetylated at R-6 and R-4, respectively), and the fully deacetylated MEL D. The first step in the pathway is the generation of mannosylerythritol by the glycosyltransferase EMT1 which catalyzes the transfer of GDP-mannose to the C-4 atom of meso-erythritol. This reaction has to be stereospecific, since only mannosyl-D-erythritol is generated. The produced disaccharide is subsequently acylated with fatty acids of various lengths by the acyltransferases MAC1 and MAC2 at positions C-2 and C-3, repectively. The existence of MEL derivatives which carry an acetyl group at C-2 implies that at least MAC1 also accepts acetyl-CoA as a donor. The final step of MEL biosynthesis is the acetylation of the fully acylated mannosylerythritol lipids catalyzed by the acetyl-CoA-dependent acetyltransferase MAT1. MAT1 displays a relaxed regioselectivity and is able to transfer acetylgroups to both positions C-4 and C-6 of the mannosyl moiety. The chain is Erythritol-mannosyl-transferase 1 from Pseudozyma antarctica (strain T-34) (Yeast).